Here is a 584-residue protein sequence, read N- to C-terminus: Phosphoinositide phospholipase C 7 (584 aa).

Residues 26–102 enclose the EF-hand-like domain; that stretch reads EIKTLFDNYS…NSPLSSLEVH (77 aa). The PI-PLC X-box domain occupies 103 to 248; sequence QDMDAPLSHY…LKKRIMISTK (146 aa). Active-site residues include His-118 and His-164. Positions 285-318 are disordered; it reads DRSVDKNDSNGDDDDDDDDDDDDDDGDDKIKKNA. A Phosphoserine modification is found at Ser-287. Acidic residues predominate over residues 294-311; it reads NGDDDDDDDDDDDDDDGD. In terms of domain architecture, PI-PLC Y-box spans 323 to 439; the sequence is KHLIAIEAGK…GYIKKPDLLL (117 aa). One can recognise a C2 domain in the interval 433 to 566; that stretch reads KKPDLLLKSN…QGIRAVPLRN (134 aa).

It depends on Ca(2+) as a cofactor. Expressed in leaves, roots, flowers and siliques.

It is found in the cell membrane. The catalysed reaction is a 1,2-diacyl-sn-glycero-3-phospho-(1D-myo-inositol-4,5-bisphosphate) + H2O = 1D-myo-inositol 1,4,5-trisphosphate + a 1,2-diacyl-sn-glycerol + H(+). Functionally, the production of the second messenger molecules diacylglycerol (DAG) and inositol 1,4,5-trisphosphate (IP3) is mediated by activated phosphatidylinositol-specific phospholipase C enzymes. In Arabidopsis thaliana (Mouse-ear cress), this protein is Phosphoinositide phospholipase C 7 (PLC7).